A 91-amino-acid chain; its full sequence is Parbolysin P6 (91 aa).

Cystine bridges form between C16–C37, C22–C33, and C47–C60.

Belongs to the worm cytolysin family. Localized within the skin and proboscis and are most readily isolated from body mucus secretions.

It is found in the secreted. Functionally, cytolysin that shows hemolytic activity (on bovine erythrocytes, HC(50)=5.75 mg/ml). This hemolytic activity is completely inhibited by small unilamelar vesicles composed of PC/PG, PC/PI and PC/PS in 1:1 molar ratios (with at least 100 mg/ml concentration). The polypeptide is Parbolysin P6 (Parborlasia corrugatus (Antarctic nemertean worm)).